We begin with the raw amino-acid sequence, 416 residues long: MSTPLQGIKVLDFTGVQSGPSCTQMLAWFGADVIKIERPGFGDVTRHQLRDIPDIDALYFTMLNSNKRSIELNTKTAEGKEVMEKLIREADILVENFHPGAIDHMGFTWEHIQEINPRLIFGSIKGFDECSPYVNVKAYENVAQAAGGAASTTGFWDGPPLVSAAALGDSNTGMHLLIGLLAALLHREKTGRGQRVTMSMQDAVLNLCRVKLRDQQRLDKLGYLEEYPQYPNGTFGDAVPRGGNAGGGGQPGWILKCKGWETDPNAYIYFTIQEQNWENTCKAIGKPEWITDPAYSTAHARQPHIFDIFAEIEKYTVTIDKHEAVAYLTQFDIPCAPVLSMKEISLDPSLRQSGSVVEVEQPLRGKYLTVGCPMKFSAFTPDIKAAPLLGEHTAAVLQELGYSDDEIAAMKQNHAI.

Residues 17-18 (QS), R38, 72-75 (LNTK), 96-98 (NFH), H104, and 137-140 (KAYE) each bind CoA. Catalysis depends on D169, which acts as the Nucleophile. 248–250 (GGQ) contacts substrate. 273–275 (QEQ) contributes to the CoA binding site.

Belongs to the CoA-transferase III family. Frc subfamily. As to quaternary structure, homodimer.

The catalysed reaction is formyl-CoA + oxalate = oxalyl-CoA + formate. The protein operates within metabolic intermediate degradation; oxalate degradation; CO(2) and formate from oxalate: step 1/2. In terms of biological role, involved in the catabolism of oxalate and in the adapatation to low pH via the induction of the oxalate-dependent acid tolerance response (ATR). Catalyzes the transfer of the CoA moiety from formyl-CoA to oxalate. The chain is Formyl-CoA:oxalate CoA-transferase from Escherichia coli O81 (strain ED1a).